The sequence spans 337 residues: Visual pigment-like receptor peropsin (337 aa).

Over 1–26 (MLRNNLGNSSDSKNEDGSVFSQTEHN) the chain is Extracellular. N-linked (GlcNAc...) asparagine glycosylation is present at Asn8. The helical transmembrane segment at 27–49 (IVATYLIMAGMISIISNIIVLGI) threads the bilayer. Topologically, residues 50–61 (FIKYKELRTPTN) are cytoplasmic. The chain crosses the membrane as a helical span at residues 62 to 87 (AIIINLAVTDIGVSSIGYPMSAASDL). Residues 88–101 (YGSWKFGYAGCQVY) are Extracellular-facing. A disulfide bond links Cys98 and Cys175. A helical transmembrane segment spans residues 102–121 (AGLNIFFGMASIGLLTVVAV). Residues 122–140 (DRYLTICLPDVGRRMTTNT) are Cytoplasmic-facing. The chain crosses the membrane as a helical span at residues 141–164 (YIGLILGAWINGLFWALMPIIGWA). The Extracellular portion of the chain corresponds to 165-188 (SYAPDPTGATCTINWRKNDRSFVS). Residues 189 to 212 (YTMTVIAINFIVPLTVMFYCYYHV) form a helical membrane-spanning segment. At 213–240 (TLSIKHHTTSDCTESLNRDWSDQIDVTK) the chain is on the cytoplasmic side. A helical membrane pass occupies residues 241–264 (MSVIMICMFLVAWSPYSIVCLWAS). The Extracellular portion of the chain corresponds to 265-272 (FGDPKKIP). A helical transmembrane segment spans residues 273 to 297 (PPMAIIAPLFAKSSTFYNPCIYVVA). Lys284 is modified (N6-(retinylidene)lysine). Topologically, residues 298–337 (NKKFRRAMLAMFKCQTHQTMPVTSILPMDVSQNPLASGRI) are cytoplasmic.

It belongs to the G-protein coupled receptor 1 family. Opsin subfamily. In terms of tissue distribution, found only in the eye, where it is localized to the retinal pigment epithelium (RPE). In the RPE, it is localized to the microvilli that surround the photoreceptor outer segments.

The protein resides in the membrane. In terms of biological role, may play a role in rpe physiology either by detecting light directly or by monitoring the concentration of retinoids or other photoreceptor-derived compounds. In Homo sapiens (Human), this protein is Visual pigment-like receptor peropsin (RRH).